We begin with the raw amino-acid sequence, 216 residues long: Thiopurine S-methyltransferase (216 aa).

Residues tryptophan 11, leucine 46, glutamate 67, and arginine 122 each contribute to the S-adenosyl-L-methionine site.

This sequence belongs to the class I-like SAM-binding methyltransferase superfamily. TPMT family.

The protein localises to the cytoplasm. The enzyme catalyses S-adenosyl-L-methionine + a thiopurine = S-adenosyl-L-homocysteine + a thiopurine S-methylether.. This is Thiopurine S-methyltransferase from Vibrio parahaemolyticus serotype O3:K6 (strain RIMD 2210633).